Here is a 501-residue protein sequence, read N- to C-terminus: Calcium-dependent protein kinase 4 (501 aa).

The Protein kinase domain maps to 25–283 (YLLGKKLGQG…AHEALCHPWI (259 aa)). ATP is bound by residues 31–39 (LGQGQFGTT) and K54. The Proton acceptor role is filled by D149. Position 189 is a phosphoserine (S189). The interval 289–319 (APDKPLDPAVLSRLKQFSQMNKIKKMALRVI) is autoinhibitory domain. 4 EF-hand domains span residues 326 to 361 (EEIGGLKELFKMIDTDNSGTITFEELKAGLKRVGSE), 362 to 397 (LMESEIKSLMDAADIDNSGTIDYGEFLAATLHINKM), 398 to 433 (EREENLVVAFSYFDKDGSGYITIDELQQACTEFGLC), and 437 to 467 (LDDMIKEIDLDNDGKIDFSEFTAMMKKGDGV). 20 residues coordinate Ca(2+): D339, D341, S343, T345, E350, D375, D377, S379, T381, E386, D411, D413, S415, Y417, E422, D445, D447, D449, K451, and E456.

The protein belongs to the protein kinase superfamily. Ser/Thr protein kinase family. CDPK subfamily. In terms of assembly, interacts with Di19.

The protein localises to the cytoplasm. It is found in the nucleus. It catalyses the reaction L-seryl-[protein] + ATP = O-phospho-L-seryl-[protein] + ADP + H(+). It carries out the reaction L-threonyl-[protein] + ATP = O-phospho-L-threonyl-[protein] + ADP + H(+). Activated by calcium. Autophosphorylation may play an important role in the regulation of the kinase activity. Its function is as follows. May play a role in signal transduction pathways that involve calcium as a second messenger. Functions as a regulator of the calcium-mediated abscisic acid (ABA) signaling pathway. Phosphorylates ABA-responsive transcription factors ABF1 and ABF4 in vitro. Phosphorylates the nuclear zinc finger Di19 in vitro. This Arabidopsis thaliana (Mouse-ear cress) protein is Calcium-dependent protein kinase 4 (CPK4).